The chain runs to 346 residues: Protein NDL1 (346 aa).

This sequence belongs to the NDRG family. In terms of assembly, interacts with GB1. Interacts with the heterodimers formed by GB1 and GG1, or GB1 and GG2. Interacts with RGS1. Expressed in root vasculature, cotyledons, leaves, petals, mature stamens and pollen grains.

Its subcellular location is the cytoplasm. Functionally, interacts with the heterotrimeric G protein beta subunit GB1 and plays an significant role in GB1-dependent regulation of lateral root formation. Involved in a signaling pathway that modulates root auxin transport and auxin gradients. Acts partially by positively regulating the auxin carrier PIN2 and AUX1. Acts, together with GB1 as positive regulator of meristem initiation and branching. GB1 and NDL1 positively regulate basipetal inflorescence auxin transport and modulate MAX2 expression in shoots, which regulates organ and lateral meristem formation by the establishment and maintenance of auxin gradients. This Arabidopsis thaliana (Mouse-ear cress) protein is Protein NDL1.